The chain runs to 535 residues: Probable lipid II flippase MurJ (535 aa).

The next 12 membrane-spanning stretches (helical) occupy residues 90 to 110 (VLFT…PFIV), 131 to 151 (FATI…MAGM), 159 to 179 (FAAA…LAYA), 192 to 212 (DLSW…WVAV), 233 to 253 (LLVL…NLLI), 274 to 294 (IYQL…LPEL), 316 to 336 (FTLF…EPIV), 350 to 370 (TVVV…FVLI), 388 to 408 (IFAG…FPSL), 413 to 433 (IATA…ATLV), 451 to 471 (LVIA…WLAF), and 484 to 504 (LTLC…AFGI).

Belongs to the MurJ/MviN family.

The protein resides in the cell inner membrane. The protein operates within cell wall biogenesis; peptidoglycan biosynthesis. Its function is as follows. Involved in peptidoglycan biosynthesis. Transports lipid-linked peptidoglycan precursors from the inner to the outer leaflet of the cytoplasmic membrane. In Rhizobium meliloti (strain 1021) (Ensifer meliloti), this protein is Probable lipid II flippase MurJ.